A 396-amino-acid polypeptide reads, in one-letter code: 1-deoxy-D-xylulose 5-phosphate reductoisomerase (396 aa).

Residues T13, G14, S15, I16, and N127 each coordinate NADPH. K128 contributes to the 1-deoxy-D-xylulose 5-phosphate binding site. E129 is a binding site for NADPH. D153 is a binding site for Mn(2+). Positions 154, 155, 184, and 207 each coordinate 1-deoxy-D-xylulose 5-phosphate. E155 contacts Mn(2+). G213 is a binding site for NADPH. 1-deoxy-D-xylulose 5-phosphate contacts are provided by S220, N225, K226, and E229. Residue E229 coordinates Mn(2+).

The protein belongs to the DXR family. The cofactor is Mg(2+). Mn(2+) is required as a cofactor.

It catalyses the reaction 2-C-methyl-D-erythritol 4-phosphate + NADP(+) = 1-deoxy-D-xylulose 5-phosphate + NADPH + H(+). Its pathway is isoprenoid biosynthesis; isopentenyl diphosphate biosynthesis via DXP pathway; isopentenyl diphosphate from 1-deoxy-D-xylulose 5-phosphate: step 1/6. Catalyzes the NADPH-dependent rearrangement and reduction of 1-deoxy-D-xylulose-5-phosphate (DXP) to 2-C-methyl-D-erythritol 4-phosphate (MEP). This Pseudomonas syringae pv. syringae (strain B728a) protein is 1-deoxy-D-xylulose 5-phosphate reductoisomerase.